A 1169-amino-acid polypeptide reads, in one-letter code: C5a peptidase (1169 aa).

Positions 1–31 are cleaved as a signal peptide; that stretch reads MRKKQKLPFDKLAIALMSTSILLNAQSDIKA. The interval 33–111 is disordered; the sequence is TVTEDTPATE…ETIRDLNDPS (79 aa). Polar residues predominate over residues 48–67; that stretch reads PQQTAVSEEAPSSSSKETNP. In terms of domain architecture, Peptidase S8 spans 101–583; sequence KETIRDLNDP…AGAVDAKKAS (483 aa). Basic and acidic residues predominate over residues 102 to 111; it reads ETIRDLNDPS. Catalysis depends on charge relay system residues Asp-132, His-195, and Ser-514. The segment at 1028 to 1135 is disordered; sequence NLLEGHSNKP…RDQLPTTNDK (108 aa). Basic and acidic residues-rich tracts occupy residues 1033 to 1056, 1063 to 1073, and 1080 to 1092; these read HSNK…KPEQ, PDKKPEAKPEQ, and PDKK…EKDS. 4 repeat units span residues 1036 to 1052, 1053 to 1069, 1070 to 1086, and 1087 to 1103. A 4 X 17 AA tandem repeats region spans residues 1036-1103; that stretch reads KPEQDGSDQV…GQTPGKTPQK (68 aa). Residues 1093 to 1108 show a composition bias toward polar residues; it reads SGQTPGKTPQKGQPSR. The short motif at 1129 to 1133 is the LPXTG sorting signal element; it reads LPTTN. Thr-1132 is subject to Pentaglycyl murein peptidoglycan amidated threonine. Residues 1133–1169 constitute a propeptide, removed by sortase; sequence NDKDTNRLHLLKLVMTTFFFGLVAHIFKTKRQKETKK.

The protein belongs to the peptidase S8 family. Cleaved by SpeB protease; leading to its degradation. Degradation by SpeB is probably strictly regulated to preserve integrity of C5a peptidase.

The protein resides in the secreted. Its subcellular location is the cell wall. It carries out the reaction The primary cleavage site is at 67-His-|-Lys-68 in human C5a with a minor secondary cleavage site at 58-Ala-|-Ser-59.. This virulence factor of S.pyogenes specifically cleaves the human serum chemotaxin C5a at '68-Lys-|-Asp-69' bond near its C-terminus, destroying its ability to serve as a chemoattractant. This Streptococcus pyogenes serotype M3 (strain ATCC BAA-595 / MGAS315) protein is C5a peptidase (scpA).